We begin with the raw amino-acid sequence, 690 residues long: Methionine--tRNA ligase (690 aa).

Residues P13–H23 carry the 'HIGH' region motif. Zn(2+)-binding residues include C144, C147, C157, and C160. Residues K335–S339 carry the 'KMSKS' region motif. K338 serves as a coordination point for ATP. The region spanning D584 to R690 is the tRNA-binding domain.

It belongs to the class-I aminoacyl-tRNA synthetase family. MetG type 1 subfamily. In terms of assembly, homodimer. Zn(2+) is required as a cofactor.

The protein resides in the cytoplasm. It carries out the reaction tRNA(Met) + L-methionine + ATP = L-methionyl-tRNA(Met) + AMP + diphosphate. Functionally, is required not only for elongation of protein synthesis but also for the initiation of all mRNA translation through initiator tRNA(fMet) aminoacylation. The sequence is that of Methionine--tRNA ligase from Cupriavidus metallidurans (strain ATCC 43123 / DSM 2839 / NBRC 102507 / CH34) (Ralstonia metallidurans).